The sequence spans 262 residues: Tetratricopeptide repeat protein 33 (262 aa).

TPR repeat units follow at residues 59 to 92, 93 to 126, and 127 to 160; these read SKQL…TPND, ATLY…NPHS, and WESW…YPMN. Phosphoserine is present on Ser-197. At Thr-251 the chain carries Phosphothreonine.

The chain is Tetratricopeptide repeat protein 33 (TTC33) from Homo sapiens (Human).